Reading from the N-terminus, the 304-residue chain is Proteasome subunit beta (304 aa).

The propeptide at 1 to 65 (MTWPHFEQLA…LTPTDAVPHG (65 aa)) is removed in mature form; by autocatalysis. Threonine 66 functions as the Nucleophile in the catalytic mechanism.

It belongs to the peptidase T1B family. As to quaternary structure, the 20S proteasome core is composed of 14 alpha and 14 beta subunits that assemble into four stacked heptameric rings, resulting in a barrel-shaped structure. The two inner rings, each composed of seven catalytic beta subunits, are sandwiched by two outer rings, each composed of seven alpha subunits. The catalytic chamber with the active sites is on the inside of the barrel. Has a gated structure, the ends of the cylinder being occluded by the N-termini of the alpha-subunits. Is capped by the proteasome-associated ATPase, ARC.

It is found in the cytoplasm. The enzyme catalyses Cleavage of peptide bonds with very broad specificity.. It participates in protein degradation; proteasomal Pup-dependent pathway. The formation of the proteasomal ATPase ARC-20S proteasome complex, likely via the docking of the C-termini of ARC into the intersubunit pockets in the alpha-rings, may trigger opening of the gate for substrate entry. Interconversion between the open-gate and close-gate conformations leads to a dynamic regulation of the 20S proteasome proteolysis activity. Functionally, component of the proteasome core, a large protease complex with broad specificity involved in protein degradation. The sequence is that of Proteasome subunit beta from Mycobacterium sp. (strain JLS).